Reading from the N-terminus, the 569-residue chain is Mitogen-activated protein kinase 7 (569 aa).

The Protein kinase domain occupies 13-304 (YKIQEIVGKG…AEEALADPYF (292 aa)). Residues 19–27 (VGKGSYGVV) and K42 each bind ATP. The active-site Proton acceptor is D139. T175 carries the post-translational modification Phosphothreonine. The TXY signature appears at 175–177 (TDY). The residue at position 177 (Y177) is a Phosphotyrosine. Residues 401 to 420 (TTVHSTSIPPNEGLDATSQV) form a disordered region.

It belongs to the protein kinase superfamily. CMGC Ser/Thr protein kinase family. MAP kinase subfamily. In terms of processing, dually phosphorylated on Thr-175 and Tyr-177, which activates the enzyme.

It catalyses the reaction L-seryl-[protein] + ATP = O-phospho-L-seryl-[protein] + ADP + H(+). The catalysed reaction is L-threonyl-[protein] + ATP = O-phospho-L-threonyl-[protein] + ADP + H(+). Its activity is regulated as follows. Activated by threonine and tyrosine phosphorylation. The sequence is that of Mitogen-activated protein kinase 7 (MPK7) from Oryza sativa subsp. japonica (Rice).